The following is a 64-amino-acid chain: uncharacterized protein (64 aa).

This is an uncharacterized protein from Escherichia phage lambda (Bacteriophage lambda).